The chain runs to 1500 residues: Synaptonemal complex protein 2 (1500 aa).

A phosphoserine mark is found at Ser457 and Ser458. Position 464 is a phosphothreonine (Thr464). The residue at position 487 (Ser487) is a Phosphoserine. A Phosphothreonine modification is found at Thr496. Ser500, Ser509, Ser518, and Ser527 each carry phosphoserine. The segment at 512–548 (KAVSKTSESGMDYAASPKSRQSDGRKRWNNRANHNKT) is disordered. Phosphothreonine occurs at positions 608 and 633. Residues Ser646, Ser650, and Ser741 each carry the phosphoserine modification. The tract at residues 796 to 820 (NPSDSMMSTRKLKEPQDGSGFSKKP) is disordered. Ser914 bears the Phosphoserine mark. Thr916 carries the phosphothreonine modification. 2 disordered regions span residues 940–1010 (LMDY…TSES) and 1029–1084 (KEET…SASV). Residues 948-958 (NTTKYKSRKSR) show a composition bias toward basic residues. Basic and acidic residues predominate over residues 977–989 (MKNDYEVVVDGRT). Residues 990–1000 (RLPRRATKTKK) show a composition bias toward basic residues. Over residues 1059-1076 (PSEEQKNSSRLREGREDS) the composition is skewed to basic and acidic residues. Residues Ser1115, Ser1117, Ser1124, Ser1133, Ser1140, Ser1144, Ser1156, Ser1159, and Ser1164 each carry the phosphoserine modification. A Phosphothreonine modification is found at Thr1168. Ser1183, Ser1213, and Ser1216 each carry phosphoserine. The tract at residues 1208–1234 (YMEPESPESCDNHMQNKREGNHAASPL) is disordered. A compositionally biased stretch (basic and acidic residues) spans 1217 to 1228 (CDNHMQNKREGN). Ser1232, Ser1275, and Ser1277 each carry phosphoserine. Thr1313 is modified (phosphothreonine). A coiled-coil region spans residues 1388 to 1429 (LLDELEKVEKDSQTLRDLEKELVDIEEKLVQKMRAYHRCERE).

The protein belongs to the SYCP2 family. Component of the lateral elements of synaptonemal complexes. Heterodimer with SYCP3. Interacts with SMC1A and SMC3. Interacts with TEX11. Post-translationally, phosphorylated. Detected in testis and spermatocytes (at protein level).

The protein resides in the nucleus. The protein localises to the chromosome. Major component of the axial/lateral elements of synaptonemal complexes (SCS) during meiotic prophase. Plays a role in the assembly of synaptonemal complexes. Required for normal meiotic chromosome synapsis during oocyte and spermatocyte development and for normal male and female fertility. Required for insertion of SYCP3 into synaptonemal complexes. May be involved in the organization of chromatin by temporarily binding to DNA scaffold attachment regions. Requires SYCP3, but not SYCP1, in order to be incorporated into the axial/lateral elements. The polypeptide is Synaptonemal complex protein 2 (Sycp2) (Mus musculus (Mouse)).